The primary structure comprises 303 residues: N-acetyl-D-glucosamine kinase (303 aa).

ATP-binding positions include 4–11 (GFDIGGTK) and 133–140 (GVGGGLVL). Zn(2+) is bound by residues His157, Cys177, Cys179, and Cys184.

The protein belongs to the ROK (NagC/XylR) family. NagK subfamily.

The enzyme catalyses N-acetyl-D-glucosamine + ATP = N-acetyl-D-glucosamine 6-phosphate + ADP + H(+). It functions in the pathway cell wall biogenesis; peptidoglycan recycling. Catalyzes the phosphorylation of N-acetyl-D-glucosamine (GlcNAc) derived from cell-wall degradation, yielding GlcNAc-6-P. In Salmonella paratyphi B (strain ATCC BAA-1250 / SPB7), this protein is N-acetyl-D-glucosamine kinase.